A 408-amino-acid polypeptide reads, in one-letter code: MASSSRFAALLLLALPALALPPSQVVPRAACATPSTVPGYNNDRLPDPFLFDDGTAVTSSADWDCRRSQIAAVVQGYEAGYLPPQPPIVSATFSSSDGTGTLTVTAGLSSDNTISFSEPITYPSGTAPAAGWPLVIAYDVLSIPVPDGIAVMVYNNDDIAQENDLSSRGVGLFYDLYGTDATASAMTAWVWGVSRIIDALETTPAANINTAKIAVTGCSRDGKGALMAGAFEPRVALTIPQESGSGGDTCWRLSKYEQDSGDVVQQATEIVTENVWFSTNFDNYVNNLSVLPYDHHELAAMVAPRPLLSYENTEYEWLSPLSAYGCMSAAHTVYEALGIPDYHGFVQVGNHSHCYFPDTLDDSLYAFFDRFLLDEDDVSTDYFTTNYQFNGTVWNASYWINWTTPQLD.

The N-terminal stretch at 1 to 19 (MASSSRFAALLLLALPALA) is a signal peptide. Intrachain disulfides connect Cys-31–Cys-65, Cys-218–Cys-354, and Cys-250–Cys-326. Positions 217–222 (GCSRDG) match the GXSYXG catalytic site motif motif. Ser-219 acts as the Nucleophile in catalysis. 3 residues coordinate substrate: Lys-223, Gln-265, and Glu-273. A glycan (N-linked (GlcNAc...) asparagine) is linked at Asn-287. Trp-317 lines the substrate pocket. Residue Asn-350 is glycosylated (N-linked (GlcNAc...) asparagine). His-353 serves as the catalytic Proton donor/acceptor. Residues Asn-390, Asn-395, and Asn-401 are each glycosylated (N-linked (GlcNAc...) asparagine).

The protein belongs to the carbohydrate esterase 15 (CE15) family.

It localises to the secreted. The catalysed reaction is a 4-O-methyl-alpha-D-glucuronosyl ester derivative + H2O = 4-O-methyl-alpha-D-glucuronate derivative + an alcohol + H(+). Functionally, glucuronoyl esterase which may play a significant role in biomass degradation, as it is considered to disconnect hemicellulose from lignin through the hydrolysis of the ester bond between 4-O-methyl-D-glucuronic acid residues of glucuronoxylans and aromatic alcohols of lignin. Can hydrolyze benzyl glucuronic acid (BnGlcA), allyl glucuronic acid (allylGlcA) and to a lower degree methyl glucuronic acid (MeGlcA) in vitro. The protein is 4-O-methyl-glucuronoyl methylesterase 1 of Wolfiporia cocos (strain MD-104) (Brown rot fungus).